The chain runs to 236 residues: UPF0173 metal-dependent hydrolase Mnod_3315 (236 aa).

Belongs to the UPF0173 family.

The polypeptide is UPF0173 metal-dependent hydrolase Mnod_3315 (Methylobacterium nodulans (strain LMG 21967 / CNCM I-2342 / ORS 2060)).